The chain runs to 63 residues: Translational regulator CsrA (63 aa).

This sequence belongs to the CsrA/RsmA family. Homodimer; the beta-strands of each monomer intercalate to form a hydrophobic core, while the alpha-helices form wings that extend away from the core.

It is found in the cytoplasm. Its function is as follows. A key translational regulator that binds mRNA to regulate translation initiation and/or mRNA stability. Mediates global changes in gene expression, shifting from rapid growth to stress survival by linking envelope stress, the stringent response and the catabolite repression systems. Usually binds in the 5'-UTR; binding at or near the Shine-Dalgarno sequence prevents ribosome-binding, repressing translation, binding elsewhere in the 5'-UTR can activate translation and/or stabilize the mRNA. Its function is antagonized by small RNA(s). The sequence is that of Translational regulator CsrA from Haemophilus influenzae (strain 86-028NP).